A 576-amino-acid chain; its full sequence is Nuclear receptor subfamily 1 group D member 2 (576 aa).

Residues 1 to 60 (MELNAGGVIAYISSSSSASSPASCHSEGSENSFQSSSSSVPSSPNSSNCDANGNPKNADI) are required for phosphorylation by CSNK1E and cytoplasmic localization. Residues 1–99 (MELNAGGVIA…HSGMTKFSGM (99 aa)) form a modulating region. The segment covering 13–47 (SSSSSASSPASCHSEGSENSFQSSSSSVPSSPNSS) has biased composition (low complexity). Residues 13-90 (SSSSSASSPA…TSAPGMTKSH (78 aa)) are disordered. Serine 46 carries the phosphoserine; by GSK3-beta modification. The segment at residues 100–176 (VLLCKVCGDV…VGMSRDAVRF (77 aa)) is a DNA-binding region (nuclear receptor). 2 consecutive NR C4-type zinc fingers follow at residues 103-123 (CKVCGDVASGFHYGVHACEGC) and 140-164 (CLKNENCSIMRMNRNRCQQCRFKKC). Residues lysine 162 and lysine 163 each carry the N6-acetyllysine; by KAT5 modification. Disordered stretches follow at residues 215 to 246 (QHDQSALPAQEQLRPKSQLEQENIKNTPSDFA) and 263 to 282 (LYNQEHRENSSESMPPQRGE). Composition is skewed to basic and acidic residues over residues 227 to 237 (LRPKSQLEQEN) and 263 to 272 (LYNQEHRENS). Disulfide bonds link cysteine 334/cysteine 340 and cysteine 371/cysteine 381. An NR LBD domain is found at 366–576 (RNSYLCNTGG…EELLAFKVHP (211 aa)). Heme contacts are provided by cysteine 381 and histidine 565. Residues 394–576 (SGHEIWEEFS…EELLAFKVHP (183 aa)) form an interaction with ZNHIT1 region.

It belongs to the nuclear hormone receptor family. NR1 subfamily. Binds DNA as a monomer or a homodimer. Interacts with NCOA5 coactivator, leading to a strong increase of transcription of target genes. Interacts (via N-terminus) with KAT5. Interacts (via C-terminus) with HDAC1. Interacts with ZNHIT1. Interacts with SIAH2. In terms of processing, deacetylated by HDAC1. Acetylation and deacetylation regulate its transcriptional regulatory activity. Post-translationally, under more reducing intracellular redox conditions, Cys-381 is in its heme-bound state, which is optimal for recruitment of the NCOR1/HDAC3 corepressor complex and repression of target genes. When subjected to oxidative stress conditions, Cys-381 undergoes oxidation to form a disulfide bridge with Cys-371, also triggering a ligand switch that results in release of bound heme and derepression of target genes. Ubiquitinated by SIAH2; leading to its proteasomal degradation. In terms of processing, phosphorylated by CSNK1E; phosphorylation enhances its cytoplasmic localization. Ubiquitous. Expressed abundantly in skeletal muscle and brown adipose tissue. Expressed during skeletal muscle myogenesis.

It is found in the nucleus. Its subcellular location is the cytoplasm. Its activity is regulated as follows. The heme-bound form can bind gaseous signaling molecules such as CO and nitric oxide (NO) and NO can reverse its transcriptional repressor activity. Functionally, transcriptional repressor which coordinates circadian rhythm and metabolic pathways in a heme-dependent manner. Integral component of the complex transcription machinery that governs circadian rhythmicity and forms a critical negative limb of the circadian clock by directly repressing the expression of core clock components BMAL1 and CLOCK. Also regulates genes involved in metabolic functions, including lipid metabolism and the inflammatory response. Acts as a receptor for heme which stimulates its interaction with the NCOR1/HDAC3 corepressor complex, enhancing transcriptional repression. Recognizes two classes of DNA response elements within the promoter of its target genes and can bind to DNA as either monomers or homodimers, depending on the nature of the response element. Binds as a monomer to a response element composed of the consensus half-site motif 5'-[A/G]GGTCA-3' preceded by an A/T-rich 5' sequence (RevRE), or as a homodimer to a direct repeat of the core motif spaced by two nuclegotides (RevDR-2). Acts as a potent competitive repressor of ROR alpha (RORA) function and also negatively regulates the expression of NR1D1. Regulates lipid and energy homeostasis in the skeletal muscle via repression of genes involved in lipid metabolism and myogenesis including: CD36, FABP3, FABP4, UCP3, SCD1 and MSTN. Regulates hepatic lipid metabolism via the repression of APOC3. Represses gene expression at a distance in macrophages by inhibiting the transcription of enhancer-derived RNAs (eRNAs). In addition to its activity as a repressor, can also act as a transcriptional activator. Acts as a transcriptional activator of the sterol regulatory element-binding protein 1 (SREBF1) and the inflammatory mediator interleukin-6 (IL6) in the skeletal muscle. Plays a role in the regulation of circadian sleep/wake cycle; essential for maintaining wakefulness during the dark phase or active period. Key regulator of skeletal muscle mitochondrial function; negatively regulates the skeletal muscle expression of core clock genes and genes involved in mitochondrial biogenesis, fatty acid beta-oxidation and lipid metabolism. May play a role in the circadian control of neutrophilic inflammation in the lung. The polypeptide is Nuclear receptor subfamily 1 group D member 2 (Mus musculus (Mouse)).